A 633-amino-acid chain; its full sequence is Threonine--tRNA ligase (633 aa).

In terms of domain architecture, TGS spans 1–61 (MINITLPDGS…DHDASLRIIT (61 aa)). Residues 243-534 (DHRRIGKQQD…LIEHHAGQFP (292 aa)) are catalytic. The Zn(2+) site is built by C334, H385, and H511.

It belongs to the class-II aminoacyl-tRNA synthetase family. As to quaternary structure, homodimer. Zn(2+) serves as cofactor.

The protein resides in the cytoplasm. It carries out the reaction tRNA(Thr) + L-threonine + ATP = L-threonyl-tRNA(Thr) + AMP + diphosphate + H(+). Its function is as follows. Catalyzes the attachment of threonine to tRNA(Thr) in a two-step reaction: L-threonine is first activated by ATP to form Thr-AMP and then transferred to the acceptor end of tRNA(Thr). Also edits incorrectly charged L-seryl-tRNA(Thr). This is Threonine--tRNA ligase from Stenotrophomonas maltophilia (strain R551-3).